A 461-amino-acid polypeptide reads, in one-letter code: Bifunctional protein GlmU (461 aa).

The pyrophosphorylase stretch occupies residues 1 to 236 (MNVLLQELFI…VFEIFGINNR (236 aa)). UDP-N-acetyl-alpha-D-glucosamine-binding positions include Lys-27, Gln-80, 85 to 86 (GT), 109 to 111 (YGD), Gly-146, Glu-160, Asn-175, and Asn-234. Asp-111 is a binding site for Mg(2+). Position 234 (Asn-234) interacts with Mg(2+). Positions 237-257 (FQLMKLEKIYQIEQAKKLLLN) are linker. The interval 258–461 (GVTLSDYNRF…SILRKENNSK (204 aa)) is N-acetyltransferase. Position 358 (Lys-358) interacts with UDP-N-acetyl-alpha-D-glucosamine. His-370 acts as the Proton acceptor in catalysis. Residues Tyr-373 and Asn-384 each contribute to the UDP-N-acetyl-alpha-D-glucosamine site. 3 residues coordinate acetyl-CoA: Ala-387, Ala-430, and Arg-447.

It in the N-terminal section; belongs to the N-acetylglucosamine-1-phosphate uridyltransferase family. This sequence in the C-terminal section; belongs to the transferase hexapeptide repeat family. Homotrimer. Requires Mg(2+) as cofactor.

The protein localises to the cytoplasm. It carries out the reaction alpha-D-glucosamine 1-phosphate + acetyl-CoA = N-acetyl-alpha-D-glucosamine 1-phosphate + CoA + H(+). The catalysed reaction is N-acetyl-alpha-D-glucosamine 1-phosphate + UTP + H(+) = UDP-N-acetyl-alpha-D-glucosamine + diphosphate. The protein operates within nucleotide-sugar biosynthesis; UDP-N-acetyl-alpha-D-glucosamine biosynthesis; N-acetyl-alpha-D-glucosamine 1-phosphate from alpha-D-glucosamine 6-phosphate (route II): step 2/2. It participates in nucleotide-sugar biosynthesis; UDP-N-acetyl-alpha-D-glucosamine biosynthesis; UDP-N-acetyl-alpha-D-glucosamine from N-acetyl-alpha-D-glucosamine 1-phosphate: step 1/1. Its pathway is bacterial outer membrane biogenesis; LPS lipid A biosynthesis. In terms of biological role, catalyzes the last two sequential reactions in the de novo biosynthetic pathway for UDP-N-acetylglucosamine (UDP-GlcNAc). The C-terminal domain catalyzes the transfer of acetyl group from acetyl coenzyme A to glucosamine-1-phosphate (GlcN-1-P) to produce N-acetylglucosamine-1-phosphate (GlcNAc-1-P), which is converted into UDP-GlcNAc by the transfer of uridine 5-monophosphate (from uridine 5-triphosphate), a reaction catalyzed by the N-terminal domain. The chain is Bifunctional protein GlmU from Wigglesworthia glossinidia brevipalpis.